A 161-amino-acid polypeptide reads, in one-letter code: MTKKALFTGSFDPVTNGHLDIIERASYLFDHVYIGLFYNLEKQGYFSIECRKKMLEEAIRQFKNVSVLVAQDRLAVDLAREVGAKYFVRGLRNSQDFDYEANLEFFNKQLADDIETVYLSTSPSLSPISSSRIRELIHFKASVKPFVPKSVVREVEKMSEE.

Substrate is bound at residue Ser-10. ATP is bound by residues 10-11 and His-18; that span reads SF. Lys-42, Ala-75, and Arg-89 together coordinate substrate. ATP contacts are provided by residues 90–92, Glu-100, and 125–131; these read GLR and LSPISSS.

It belongs to the bacterial CoaD family. Homohexamer. Mg(2+) is required as a cofactor.

It is found in the cytoplasm. The catalysed reaction is (R)-4'-phosphopantetheine + ATP + H(+) = 3'-dephospho-CoA + diphosphate. Its pathway is cofactor biosynthesis; coenzyme A biosynthesis; CoA from (R)-pantothenate: step 4/5. Its function is as follows. Reversibly transfers an adenylyl group from ATP to 4'-phosphopantetheine, yielding dephospho-CoA (dPCoA) and pyrophosphate. This Streptococcus agalactiae serotype Ia (strain ATCC 27591 / A909 / CDC SS700) protein is Phosphopantetheine adenylyltransferase.